A 175-amino-acid polypeptide reads, in one-letter code: ATP-dependent protease subunit HslV (175 aa).

The active site involves Thr-2. Residues Ala-156, Cys-159, and Thr-162 each contribute to the Na(+) site.

The protein belongs to the peptidase T1B family. HslV subfamily. As to quaternary structure, a double ring-shaped homohexamer of HslV is capped on each side by a ring-shaped HslU homohexamer. The assembly of the HslU/HslV complex is dependent on binding of ATP.

Its subcellular location is the cytoplasm. The enzyme catalyses ATP-dependent cleavage of peptide bonds with broad specificity.. With respect to regulation, allosterically activated by HslU binding. Protease subunit of a proteasome-like degradation complex believed to be a general protein degrading machinery. This chain is ATP-dependent protease subunit HslV, found in Rhizobium johnstonii (strain DSM 114642 / LMG 32736 / 3841) (Rhizobium leguminosarum bv. viciae).